Reading from the N-terminus, the 443-residue chain is ATP-dependent protease ATPase subunit HslU (443 aa).

ATP is bound by residues Ile-18, 60-65, Asp-256, Glu-321, and Arg-393; that span reads GVGKTE.

Belongs to the ClpX chaperone family. HslU subfamily. A double ring-shaped homohexamer of HslV is capped on each side by a ring-shaped HslU homohexamer. The assembly of the HslU/HslV complex is dependent on binding of ATP.

The protein localises to the cytoplasm. Its function is as follows. ATPase subunit of a proteasome-like degradation complex; this subunit has chaperone activity. The binding of ATP and its subsequent hydrolysis by HslU are essential for unfolding of protein substrates subsequently hydrolyzed by HslV. HslU recognizes the N-terminal part of its protein substrates and unfolds these before they are guided to HslV for hydrolysis. The protein is ATP-dependent protease ATPase subunit HslU of Buchnera aphidicola subsp. Acyrthosiphon pisum (strain APS) (Acyrthosiphon pisum symbiotic bacterium).